A 208-amino-acid chain; its full sequence is Large ribosomal subunit protein bL9 (208 aa).

The tract at residues 168–208 is disordered; it reads GKVEKGSCTEGESLELGSVDNDINSGNVDSNESEKQDSVSE. The segment covering 188-197 has biased composition (polar residues); that stretch reads NDINSGNVDS. A compositionally biased stretch (basic and acidic residues) spans 199–208; the sequence is ESEKQDSVSE.

The protein belongs to the bacterial ribosomal protein bL9 family.

Functionally, binds to the 23S rRNA. The protein is Large ribosomal subunit protein bL9 of Ehrlichia chaffeensis (strain ATCC CRL-10679 / Arkansas).